A 218-amino-acid chain; its full sequence is Elongation factor Ts (218 aa).

An involved in Mg(2+) ion dislocation from EF-Tu region spans residues 82-85 (TDFV).

This sequence belongs to the EF-Ts family.

The protein localises to the cytoplasm. Associates with the EF-Tu.GDP complex and induces the exchange of GDP to GTP. It remains bound to the aminoacyl-tRNA.EF-Tu.GTP complex up to the GTP hydrolysis stage on the ribosome. The sequence is that of Elongation factor Ts from Prochlorococcus marinus (strain NATL2A).